The chain runs to 627 residues: CTP synthase (627 aa).

A Glutamine amidotransferase type-1 domain is found at 300-554; it reads CIAVVGKYTK…LASVDRLNQY (255 aa). Active-site for GATase activity residues include Cys-399, His-526, and Glu-528. A phosphoserine mark is found at Ser-567, Ser-570, Ser-571, and Ser-588. Position 595 is a phosphothreonine (Thr-595). The span at 599–613 shows a compositional bias: polar residues; it reads GISKSCNGSISTSDS. The interval 599–627 is disordered; sequence GISKSCNGSISTSDSEGACGGVDPTNGHK.

Belongs to the CTP synthase family. In terms of tissue distribution, in ovary, expressed in oocytes, follicle cells and nurse cells. Also expressed in larval and adult testis (at protein level). In larvae, expressed in lymph gland, salivary gland, regions of the midgut, testis, optical lobe and trachea. Isoform 1 is expressed in adult testis, ovary, accessory gland and head. Isoform 2 is weakly expressed in ovary.

It is found in the cytoplasm. It carries out the reaction UTP + L-glutamine + ATP + H2O = CTP + L-glutamate + ADP + phosphate + 2 H(+). It participates in pyrimidine metabolism; CTP biosynthesis via de novo pathway; CTP from UDP: step 2/2. Its function is as follows. Catalyzes the ATP-dependent amination of UTP to CTP with either L-glutamine or ammonia as the source of nitrogen. Constitutes the rate-limiting enzyme in the synthesis of cytosine nucleotides. Functionally, required for assembly of cytoophidium in female germline cells. In nurse cells, CTPsyn filament assembly in the cytoophidium is regulated by Ack kinase which may thereby contribute to the control of CTP production at specific stages of oogenesis and development of the nurse cell membrane. This Drosophila melanogaster (Fruit fly) protein is CTP synthase.